The following is a 1289-amino-acid chain: Pesticidal crystal protein Cry5Ab (1289 aa).

The interval 1263 to 1289 (PLPTDDQNSEGNTASSTNSDTSMNNNQ) is disordered. The span at 1274-1289 (NTASSTNSDTSMNNNQ) shows a compositional bias: low complexity.

It belongs to the delta endotoxin family.

Functionally, endotoxin with nematicidal activity. This is Pesticidal crystal protein Cry5Ab (cry5Ab) from Bacillus thuringiensis subsp. darmstadiensis.